The chain runs to 269 residues: Indole-3-glycerol phosphate synthase (269 aa).

It belongs to the TrpC family.

The catalysed reaction is 1-(2-carboxyphenylamino)-1-deoxy-D-ribulose 5-phosphate + H(+) = (1S,2R)-1-C-(indol-3-yl)glycerol 3-phosphate + CO2 + H2O. The protein operates within amino-acid biosynthesis; L-tryptophan biosynthesis; L-tryptophan from chorismate: step 4/5. This is Indole-3-glycerol phosphate synthase from Rhodococcus jostii (strain RHA1).